The following is a 449-amino-acid chain: MTEISSMVISHKKAKIEEMESAWHGDLDGLLHNLYNHEYIHECVVLKTCNRVEIYVVSPSSSILFSFAKEMGASTHIIDFYGHDESLEHLLRLAGGLESMIVGEDQILGQIKELYAYSKKAGTTGKILDTAFDKAIQVGKRIRNETRINKGSVSIGSAAVDLAEEILDGLAGKSVLVIGAGEIGVLVAKALAAKDIEAIYIANRTFKKAEELAYELGGYAVKLNDVQTQLKNADVVISGTGAPHYILTREIVEKAIEERDKTRKLLLIDIANPRDIEESVAELDNVKLCNIDNLRVISEKTLKMRKEEAKKAEAIIQEEIKLLNLQYKRQRADKIISDLYKQIYDVRIREREKAVNRLCAYHTIGKIETDVLDDLTHSIANKILAEPTKVLRQAAELGNDEFLDVAARIFCLEKDKVKAEKIKSDCGIKVEKMKPDCESATDRVSEKGN.

Residues 48–51 (TCNR), Ser-99, 104–106 (EDQ), and Gln-110 each bind substrate. Cys-49 serves as the catalytic Nucleophile. 179–184 (GAGEIG) lines the NADP(+) pocket.

The protein belongs to the glutamyl-tRNA reductase family. In terms of assembly, homodimer.

The enzyme catalyses (S)-4-amino-5-oxopentanoate + tRNA(Glu) + NADP(+) = L-glutamyl-tRNA(Glu) + NADPH + H(+). It participates in porphyrin-containing compound metabolism; protoporphyrin-IX biosynthesis; 5-aminolevulinate from L-glutamyl-tRNA(Glu): step 1/2. Its function is as follows. Catalyzes the NADPH-dependent reduction of glutamyl-tRNA(Glu) to glutamate 1-semialdehyde (GSA). This Methanosarcina barkeri (strain Fusaro / DSM 804) protein is Glutamyl-tRNA reductase.